We begin with the raw amino-acid sequence, 84 residues long: Large ribosomal subunit protein bL27 (84 aa).

Residues 1–21 (MAHKKGAGSTKNGRDSKPKML) form a disordered region.

This sequence belongs to the bacterial ribosomal protein bL27 family.

This chain is Large ribosomal subunit protein bL27, found in Dehalococcoides mccartyi (strain ATCC BAA-2100 / JCM 16839 / KCTC 5957 / BAV1).